The chain runs to 306 residues: Lipoyl synthase (306 aa).

[4Fe-4S] cluster is bound by residues cysteine 41, cysteine 46, cysteine 52, cysteine 68, cysteine 72, cysteine 75, and serine 281. The region spanning 54-270 (GARRTATFMI…RKVAMDKGFK (217 aa)) is the Radical SAM core domain. A disordered region spans residues 283 to 306 (HADEQVNEAAKEKHRLGEEKLQQN).

The protein belongs to the radical SAM superfamily. Lipoyl synthase family. [4Fe-4S] cluster is required as a cofactor.

It localises to the cytoplasm. It catalyses the reaction [[Fe-S] cluster scaffold protein carrying a second [4Fe-4S](2+) cluster] + N(6)-octanoyl-L-lysyl-[protein] + 2 oxidized [2Fe-2S]-[ferredoxin] + 2 S-adenosyl-L-methionine + 4 H(+) = [[Fe-S] cluster scaffold protein] + N(6)-[(R)-dihydrolipoyl]-L-lysyl-[protein] + 4 Fe(3+) + 2 hydrogen sulfide + 2 5'-deoxyadenosine + 2 L-methionine + 2 reduced [2Fe-2S]-[ferredoxin]. It participates in protein modification; protein lipoylation via endogenous pathway; protein N(6)-(lipoyl)lysine from octanoyl-[acyl-carrier-protein]. In terms of biological role, catalyzes the radical-mediated insertion of two sulfur atoms into the C-6 and C-8 positions of the octanoyl moiety bound to the lipoyl domains of lipoate-dependent enzymes, thereby converting the octanoylated domains into lipoylated derivatives. The sequence is that of Lipoyl synthase from Staphylococcus haemolyticus (strain JCSC1435).